Reading from the N-terminus, the 318-residue chain is MTLKVGVLMGGRSSEREVSLKTGEAVYNALKVKNYLAVKIDVGLDVVERIKEERIDLAFIALHGRYGEDGTIQGLLEMLDIPYTGSGVLASALAMDKAATKKIIQYEGLPTPPFMLVEKKEALKESLQACSERICREMGLPLVVKAPTQGSTIGMSFVHKEEDMAGALELAYDYDPVALVEQFIRGTEVTASILGNEEPVALPLIEIVSATGVYDYKAKYTAGMSDHIIPPRIPEKQQNAIKKLAVSTFKSLGCRGLARVDFIVDKQGNPFILEVNTIPGMTATSLFPDAARAAGIEFPDLIEKLVELAMENCGIRRR.

The region spanning 101 to 307 (KKIIQYEGLP…FPDLIEKLVE (207 aa)) is the ATP-grasp domain. 135-190 (CREMGLPLVVKAPTQGSTIGMSFVHKEEDMAGALELAYDYDPVALVEQFIRGTEVT) serves as a coordination point for ATP. Positions 261, 274, and 276 each coordinate Mg(2+).

Belongs to the D-alanine--D-alanine ligase family. It depends on Mg(2+) as a cofactor. Mn(2+) serves as cofactor.

Its subcellular location is the cytoplasm. It catalyses the reaction 2 D-alanine + ATP = D-alanyl-D-alanine + ADP + phosphate + H(+). The protein operates within cell wall biogenesis; peptidoglycan biosynthesis. Its function is as follows. Cell wall formation. The chain is D-alanine--D-alanine ligase from Pelotomaculum thermopropionicum (strain DSM 13744 / JCM 10971 / SI).